The sequence spans 282 residues: ATP phosphoribosyltransferase (282 aa).

Belongs to the ATP phosphoribosyltransferase family. Long subfamily. It depends on Mg(2+) as a cofactor.

The protein localises to the cytoplasm. It carries out the reaction 1-(5-phospho-beta-D-ribosyl)-ATP + diphosphate = 5-phospho-alpha-D-ribose 1-diphosphate + ATP. It participates in amino-acid biosynthesis; L-histidine biosynthesis; L-histidine from 5-phospho-alpha-D-ribose 1-diphosphate: step 1/9. With respect to regulation, feedback inhibited by histidine. Its function is as follows. Catalyzes the condensation of ATP and 5-phosphoribose 1-diphosphate to form N'-(5'-phosphoribosyl)-ATP (PR-ATP). Has a crucial role in the pathway because the rate of histidine biosynthesis seems to be controlled primarily by regulation of HisG enzymatic activity. This is ATP phosphoribosyltransferase from Pyrobaculum aerophilum (strain ATCC 51768 / DSM 7523 / JCM 9630 / CIP 104966 / NBRC 100827 / IM2).